A 285-amino-acid polypeptide reads, in one-letter code: NAD kinase (285 aa).

The active-site Proton acceptor is the aspartate 66. Residues 66-67 (DG), 137-138 (ND), arginine 148, arginine 165, aspartate 167, and 178-183 (TAYSLS) each bind NAD(+).

Belongs to the NAD kinase family. Requires a divalent metal cation as cofactor.

It is found in the cytoplasm. The catalysed reaction is NAD(+) + ATP = ADP + NADP(+) + H(+). Involved in the regulation of the intracellular balance of NAD and NADP, and is a key enzyme in the biosynthesis of NADP. Catalyzes specifically the phosphorylation on 2'-hydroxyl of the adenosine moiety of NAD to yield NADP. This Prosthecochloris aestuarii (strain DSM 271 / SK 413) protein is NAD kinase.